We begin with the raw amino-acid sequence, 424 residues long: UDP-N-acetylglucosamine 1-carboxyvinyltransferase (424 aa).

22–23 contacts phosphoenolpyruvate; it reads KN. UDP-N-acetyl-alpha-D-glucosamine is bound at residue Arg-93. The active-site Proton donor is Cys-117. Cys-117 is modified (2-(S-cysteinyl)pyruvic acid O-phosphothioketal). Residues 122-126, 162-165, Asp-307, and Ile-329 each bind UDP-N-acetyl-alpha-D-glucosamine; these read RPVDL and KVSV.

The protein belongs to the EPSP synthase family. MurA subfamily.

It localises to the cytoplasm. The enzyme catalyses phosphoenolpyruvate + UDP-N-acetyl-alpha-D-glucosamine = UDP-N-acetyl-3-O-(1-carboxyvinyl)-alpha-D-glucosamine + phosphate. Its pathway is cell wall biogenesis; peptidoglycan biosynthesis. Its function is as follows. Cell wall formation. Adds enolpyruvyl to UDP-N-acetylglucosamine. In Haemophilus influenzae (strain PittEE), this protein is UDP-N-acetylglucosamine 1-carboxyvinyltransferase.